A 455-amino-acid polypeptide reads, in one-letter code: Ribosome biogenesis protein NOP53 (455 aa).

Positions 1–15 (MAPTNLTKKPSQYKQ) are enriched in polar residues. The interval 1–25 (MAPTNLTKKPSQYKQSSRKGKKAWR) is disordered. Over residues 16–25 (SSRKGKKAWR) the composition is skewed to basic residues. Serine 31 carries the phosphoserine modification. Residues 264 to 333 (HLMETLDDNE…RNKAKRHEEK (70 aa)) form a disordered region. The span at 268 to 294 (TLDDNEEEESSSNEEEEEEEEENENEN) shows a compositional bias: acidic residues. The span at 314–328 (VKNKKKTKYQRNKAK) shows a compositional bias: basic residues.

Belongs to the NOP53 family. Interacts with CBF5, FPR3, FPR4, NOP2, PIH1, RRN3, RRP6 and PAP2. Interacts with pre-60S ribosomal particles.

Its subcellular location is the nucleus. The protein localises to the nucleolus. It is found in the nucleoplasm. Functionally, late-acting factor in the nuclear maturation of 60S ribosomal subunits, which is required for normal acquisition of export competence. Required for the export of the large subunit. Acts to stimulate the RNase activity of the exosome complex, and may recruit the exosome to 7S pre-rRNA for processing. Associates with numerous RNAs including the 27S and 7S pre-rRNAs and the box H/ACA snoRNA snR37. Also interacts (via N-terminal region) with the mature 25S rRNA and the mature 5.8S rRNA. This chain is Ribosome biogenesis protein NOP53, found in Saccharomyces cerevisiae (strain ATCC 204508 / S288c) (Baker's yeast).